A 167-amino-acid polypeptide reads, in one-letter code: Phosphopantetheine adenylyltransferase (167 aa).

Residue Thr10 participates in substrate binding. Residues 10–11 (TF) and His18 each bind ATP. 3 residues coordinate substrate: Lys42, Leu75, and Arg89. ATP contacts are provided by residues 90–92 (GVR), Glu100, and 125–131 (YTYVASS).

This sequence belongs to the bacterial CoaD family. Homohexamer. Mg(2+) is required as a cofactor.

The protein localises to the cytoplasm. It catalyses the reaction (R)-4'-phosphopantetheine + ATP + H(+) = 3'-dephospho-CoA + diphosphate. It participates in cofactor biosynthesis; coenzyme A biosynthesis; CoA from (R)-pantothenate: step 4/5. In terms of biological role, reversibly transfers an adenylyl group from ATP to 4'-phosphopantetheine, yielding dephospho-CoA (dPCoA) and pyrophosphate. The chain is Phosphopantetheine adenylyltransferase from Chlorobium phaeobacteroides (strain DSM 266 / SMG 266 / 2430).